A 236-amino-acid chain; its full sequence is NAP1-binding protein 2 (236 aa).

Position 102 is a phosphoserine (Ser-102). One can recognise an SH3 domain in the interval 110–171 (IVNQRAVALY…PEEFVSYIQP (62 aa)). Phosphoserine is present on residues Ser-196 and Ser-235.

In terms of assembly, interacts with PBS2 and PTC1.

The protein localises to the cytoplasm. Negatively regulates the high-osmolarity glycerol (HOG) pathway through its negative regulation of the HOG1 kinase activity. Mediates the binding between the PTC1 phosphatase and the PBS2 MAP/ERK kinase (MEK). With PTC1, regulates endoplasmic reticulum inheritance through the cell wall integrity (CWI) MAPK pathway by modulating the MAPK, SLT2. The sequence is that of NAP1-binding protein 2 (NBP2) from Saccharomyces cerevisiae (strain ATCC 204508 / S288c) (Baker's yeast).